The following is a 167-amino-acid chain: Lipoprotein signal peptidase (167 aa).

A run of 3 helical transmembrane segments spans residues 10 to 30 (LIWL…KAWV), 68 to 88 (WQMW…TFWL), and 98 to 118 (SALP…DRFL). Residues Asp124 and Asp142 contribute to the active site. The chain crosses the membrane as a helical span at residues 138–158 (FNLADSAIVAGAIGIGLLSLF).

The protein belongs to the peptidase A8 family.

Its subcellular location is the cell inner membrane. It carries out the reaction Release of signal peptides from bacterial membrane prolipoproteins. Hydrolyzes -Xaa-Yaa-Zaa-|-(S,diacylglyceryl)Cys-, in which Xaa is hydrophobic (preferably Leu), and Yaa (Ala or Ser) and Zaa (Gly or Ala) have small, neutral side chains.. Its pathway is protein modification; lipoprotein biosynthesis (signal peptide cleavage). Functionally, this protein specifically catalyzes the removal of signal peptides from prolipoproteins. The sequence is that of Lipoprotein signal peptidase from Xylella fastidiosa (strain 9a5c).